A 226-amino-acid polypeptide reads, in one-letter code: ATP-dependent dethiobiotin synthetase BioD (226 aa).

13 to 18 lines the ATP pocket; it reads DVGKTL. Threonine 17 contacts Mg(2+). Residue lysine 38 is part of the active site. ATP-binding positions include aspartate 55, 117–120, 177–178, 206–208, and glutamate 213; these read EGAG, NR, and PFV. Residues aspartate 55 and glutamate 117 each coordinate Mg(2+).

This sequence belongs to the dethiobiotin synthetase family. In terms of assembly, homodimer. Mg(2+) is required as a cofactor.

It is found in the cytoplasm. It carries out the reaction (7R,8S)-7,8-diammoniononanoate + CO2 + ATP = (4R,5S)-dethiobiotin + ADP + phosphate + 3 H(+). Its pathway is cofactor biosynthesis; biotin biosynthesis; biotin from 7,8-diaminononanoate: step 1/2. Functionally, catalyzes a mechanistically unusual reaction, the ATP-dependent insertion of CO2 between the N7 and N8 nitrogen atoms of 7,8-diaminopelargonic acid (DAPA, also called 7,8-diammoniononanoate) to form a ureido ring. This is ATP-dependent dethiobiotin synthetase BioD from Aeromonas salmonicida (strain A449).